We begin with the raw amino-acid sequence, 922 residues long: DNA gyrase subunit A (922 aa).

One can recognise a Topo IIA-type catalytic domain in the interval leucine 34 to leucine 534. Residue tyrosine 122 is the O-(5'-phospho-DNA)-tyrosine intermediate of the active site. The GyrA-box signature appears at glutamine 561 to glycine 567. Disordered stretches follow at residues methionine 715 to methionine 763 and isoleucine 899 to glutamate 922. Residues aspartate 723–aspartate 743 show a composition bias toward acidic residues.

It belongs to the type II topoisomerase GyrA/ParC subunit family. In terms of assembly, heterotetramer, composed of two GyrA and two GyrB chains. In the heterotetramer, GyrA contains the active site tyrosine that forms a transient covalent intermediate with DNA, while GyrB binds cofactors and catalyzes ATP hydrolysis.

It localises to the cytoplasm. The enzyme catalyses ATP-dependent breakage, passage and rejoining of double-stranded DNA.. A type II topoisomerase that negatively supercoils closed circular double-stranded (ds) DNA in an ATP-dependent manner to modulate DNA topology and maintain chromosomes in an underwound state. Negative supercoiling favors strand separation, and DNA replication, transcription, recombination and repair, all of which involve strand separation. Also able to catalyze the interconversion of other topological isomers of dsDNA rings, including catenanes and knotted rings. Type II topoisomerases break and join 2 DNA strands simultaneously in an ATP-dependent manner. In Aeromonas salmonicida, this protein is DNA gyrase subunit A.